The primary structure comprises 200 residues: Recombination protein RecR (200 aa).

The C4-type zinc-finger motif lies at 58–75 (CSNCFCLKISQTSPCNFC). A Toprim domain is found at 82–177 (SSLCIVATPK…KISRLALGMP (96 aa)).

This sequence belongs to the RecR family.

May play a role in DNA repair. It seems to be involved in an RecBC-independent recombinational process of DNA repair. It may act with RecF and RecO. This Chlamydia trachomatis serovar L2 (strain ATCC VR-902B / DSM 19102 / 434/Bu) protein is Recombination protein RecR.